The following is a 143-amino-acid chain: Probable cyclic pyranopterin monophosphate synthase (143 aa).

Substrate contacts are provided by residues methionine 61 to histidine 63 and methionine 97 to glutamate 98. Aspartate 112 is a catalytic residue.

Belongs to the MoaC family. Homohexamer; trimer of dimers.

It carries out the reaction (8S)-3',8-cyclo-7,8-dihydroguanosine 5'-triphosphate = cyclic pyranopterin phosphate + diphosphate. The protein operates within cofactor biosynthesis; molybdopterin biosynthesis. Catalyzes the conversion of (8S)-3',8-cyclo-7,8-dihydroguanosine 5'-triphosphate to cyclic pyranopterin monophosphate (cPMP). This is Probable cyclic pyranopterin monophosphate synthase from Sulfolobus acidocaldarius (strain ATCC 33909 / DSM 639 / JCM 8929 / NBRC 15157 / NCIMB 11770).